A 265-amino-acid chain; its full sequence is MSVSQKHPFHLVDPSPWPLLGSLGALASTIGGVMYMHSFTGGGTLLCLGLGMILYTMFVWWRDVIRESTYEGHHTFVVQLGLRYGIILFIVSEVMFFLAFFWAFFHSSLAPTVEIGAIWPPKGISVLDPWGIPFLNTLILLSSGAAVTWAHHAILAGLKQQAVYALIATVFLALVFTGFQGIEYIEAPFTISDGIYGSTFFLATGFHGFHVIIGTIFLIICGIRQYLGHFTPKHHFGFEAAAFYWHFVDVVWLFLFVSIYWWGGN.

Helical transmembrane passes span 16-36 (PWPLLGSLGALASTIGGVMYM), 41-61 (GGGTLLCLGLGMILYTMFVWW), 85-105 (GIILFIVSEVMFFLAFFWAFF), 138-158 (LILLSSGAAVTWAHHAILAGL), 162-182 (AVYALIATVFLALVFTGFQGI), 200-220 (FFLATGFHGFHVIIGTIFLII), and 242-262 (AFYWHFVDVVWLFLFVSIYWW).

Belongs to the cytochrome c oxidase subunit 3 family. Component of the cytochrome c oxidase (complex IV, CIV), a multisubunit enzyme composed of a catalytic core of 3 subunits and several supernumerary subunits. The complex exists as a monomer or a dimer and forms supercomplexes (SCs) in the inner mitochondrial membrane with ubiquinol-cytochrome c oxidoreductase (cytochrome b-c1 complex, complex III, CIII).

Its subcellular location is the mitochondrion inner membrane. It carries out the reaction 4 Fe(II)-[cytochrome c] + O2 + 8 H(+)(in) = 4 Fe(III)-[cytochrome c] + 2 H2O + 4 H(+)(out). Functionally, component of the cytochrome c oxidase, the last enzyme in the mitochondrial electron transport chain which drives oxidative phosphorylation. The respiratory chain contains 3 multisubunit complexes succinate dehydrogenase (complex II, CII), ubiquinol-cytochrome c oxidoreductase (cytochrome b-c1 complex, complex III, CIII) and cytochrome c oxidase (complex IV, CIV), that cooperate to transfer electrons derived from NADH and succinate to molecular oxygen, creating an electrochemical gradient over the inner membrane that drives transmembrane transport and the ATP synthase. Cytochrome c oxidase is the component of the respiratory chain that catalyzes the reduction of oxygen to water. Electrons originating from reduced cytochrome c in the intermembrane space (IMS) are transferred via the dinuclear copper A center (CU(A)) of subunit 2 and heme A of subunit 1 to the active site in subunit 1, a binuclear center (BNC) formed by heme A3 and copper B (CU(B)). The BNC reduces molecular oxygen to 2 water molecules using 4 electrons from cytochrome c in the IMS and 4 protons from the mitochondrial matrix. This is Cytochrome c oxidase subunit 3 (COX3) from Marchantia polymorpha (Common liverwort).